Consider the following 115-residue polypeptide: Large ribosomal subunit protein uL22 (115 aa).

This sequence belongs to the universal ribosomal protein uL22 family. Part of the 50S ribosomal subunit.

This protein binds specifically to 23S rRNA; its binding is stimulated by other ribosomal proteins, e.g. L4, L17, and L20. It is important during the early stages of 50S assembly. It makes multiple contacts with different domains of the 23S rRNA in the assembled 50S subunit and ribosome. Its function is as follows. The globular domain of the protein is located near the polypeptide exit tunnel on the outside of the subunit, while an extended beta-hairpin is found that lines the wall of the exit tunnel in the center of the 70S ribosome. This Coxiella burnetii (strain CbuK_Q154) (Coxiella burnetii (strain Q154)) protein is Large ribosomal subunit protein uL22.